We begin with the raw amino-acid sequence, 433 residues long: Signal recognition particle 54 kDa protein (433 aa).

Residues 106-113 (GVEGSGKT), 186-190 (DTAGR), and 244-247 (TKMD) each bind GTP.

Belongs to the GTP-binding SRP family. SRP54 subfamily. As to quaternary structure, part of the signal recognition particle protein translocation system, which is composed of SRP and FtsY. Archaeal SRP consists of a 7S RNA molecule of 300 nucleotides and two protein subunits: SRP54 and SRP19.

It localises to the cytoplasm. The catalysed reaction is GTP + H2O = GDP + phosphate + H(+). In terms of biological role, involved in targeting and insertion of nascent membrane proteins into the cytoplasmic membrane. Binds to the hydrophobic signal sequence of the ribosome-nascent chain (RNC) as it emerges from the ribosomes. The SRP-RNC complex is then targeted to the cytoplasmic membrane where it interacts with the SRP receptor FtsY. This is Signal recognition particle 54 kDa protein from Pyrobaculum aerophilum (strain ATCC 51768 / DSM 7523 / JCM 9630 / CIP 104966 / NBRC 100827 / IM2).